Reading from the N-terminus, the 167-residue chain is Peptide deformylase (167 aa).

Residues Cys91 and His133 each contribute to the Fe cation site. Glu134 is a catalytic residue. His137 is a binding site for Fe cation.

It belongs to the polypeptide deformylase family. Fe(2+) is required as a cofactor.

It catalyses the reaction N-terminal N-formyl-L-methionyl-[peptide] + H2O = N-terminal L-methionyl-[peptide] + formate. Its function is as follows. Removes the formyl group from the N-terminal Met of newly synthesized proteins. Requires at least a dipeptide for an efficient rate of reaction. N-terminal L-methionine is a prerequisite for activity but the enzyme has broad specificity at other positions. The protein is Peptide deformylase of Pseudoalteromonas translucida (strain TAC 125).